The sequence spans 466 residues: Soluble pyridine nucleotide transhydrogenase (466 aa).

Glu-36 to Cys-45 serves as a coordination point for FAD.

Belongs to the class-I pyridine nucleotide-disulfide oxidoreductase family. The cofactor is FAD.

Its subcellular location is the cytoplasm. It carries out the reaction NAD(+) + NADPH = NADH + NADP(+). Conversion of NADPH, generated by peripheral catabolic pathways, to NADH, which can enter the respiratory chain for energy generation. The protein is Soluble pyridine nucleotide transhydrogenase of Citrobacter koseri (strain ATCC BAA-895 / CDC 4225-83 / SGSC4696).